Here is a 354-residue protein sequence, read N- to C-terminus: Putative F-box/kelch-repeat protein At5g03000 (354 aa).

Positions Pro-37–Ile-86 constitute an F-box domain. 2 Kelch repeats span residues Glu-143–Gly-189 and Lys-190–Lys-236.

This chain is Putative F-box/kelch-repeat protein At5g03000, found in Arabidopsis thaliana (Mouse-ear cress).